Here is a 956-residue protein sequence, read N- to C-terminus: Matrilin-2 (956 aa).

The first 23 residues, 1–23 (MEKMLVGCLLMLGQLFLVLPVDG), serve as a signal peptide directing secretion. One can recognise a VWFA 1 domain in the interval 57-232 (DLVFIIDSSR…SQIESLTSVF (176 aa)). The N-linked (GlcNAc...) asparagine glycan is linked to asparagine 221. EGF-like domains follow at residues 238–278 (TVHM…KTCR), 279–319 (IQDL…KRCT), 320–360 (AVDY…KTCS), 361–401 (KIDY…KTCR), 402–442 (RINY…KTCS), 443–483 (RVDH…KTCS), 484–524 (RADY…KTCA), 525–565 (KLDS…KTCR), 566–606 (RKDV…KRCR), and 607–647 (RKNV…KHCK). Disulfide bonds link cysteine 242-cysteine 253, cysteine 249-cysteine 262, cysteine 264-cysteine 277, cysteine 283-cysteine 294, cysteine 290-cysteine 303, cysteine 305-cysteine 318, cysteine 324-cysteine 335, cysteine 331-cysteine 344, cysteine 346-cysteine 359, cysteine 365-cysteine 376, cysteine 372-cysteine 385, cysteine 387-cysteine 400, cysteine 406-cysteine 417, cysteine 413-cysteine 426, cysteine 428-cysteine 441, cysteine 447-cysteine 458, cysteine 454-cysteine 467, cysteine 469-cysteine 482, cysteine 488-cysteine 499, cysteine 495-cysteine 508, cysteine 510-cysteine 523, cysteine 529-cysteine 540, cysteine 536-cysteine 549, cysteine 551-cysteine 564, cysteine 570-cysteine 581, cysteine 577-cysteine 590, cysteine 592-cysteine 605, cysteine 611-cysteine 622, cysteine 618-cysteine 631, and cysteine 633-cysteine 646. In terms of domain architecture, VWFA 2 spans 655 to 830 (DLVFVIDGSK…STMGEISEKL (176 aa)). Residue asparagine 890 is glycosylated (N-linked (GlcNAc...) asparagine). Residues 917–955 (KCENLILFQNVANEEVRKLTQRLEEMTQRMEALENRLKY) are a coiled coil.

In terms of tissue distribution, detected in a variety of organs, including calvaria, uterus, heart and brain, as well as fibroblast and osteoblast cell lines.

It is found in the secreted. Involved in matrix assembly. In Mus musculus (Mouse), this protein is Matrilin-2 (Matn2).